The chain runs to 478 residues: Lactate utilization protein B (478 aa).

4Fe-4S ferredoxin-type domains are found at residues 303–333 and 352–381; these read GTEFQSALHCIRCAACINVCPVYRHVGGHAY and YDDHKELPYASSLCAACTEACPVKIPLHEQ. [4Fe-4S] cluster-binding residues include cysteine 312, cysteine 315, cysteine 318, cysteine 322, cysteine 365, cysteine 368, and cysteine 372.

The protein belongs to the LutB/YkgF family.

Its function is as follows. Is involved in L-lactate degradation and allows cells to grow with lactate as the sole carbon source. Has probably a role as an electron transporter during oxidation of L-lactate. This chain is Lactate utilization protein B, found in Oceanobacillus iheyensis (strain DSM 14371 / CIP 107618 / JCM 11309 / KCTC 3954 / HTE831).